Reading from the N-terminus, the 155-residue chain is NADPH-dependent 7-cyano-7-deazaguanine reductase (155 aa).

Residues 1–20 (MMPNTDVSSLSMLGQQTETA) show a composition bias toward polar residues. Residues 1–26 (MMPNTDVSSLSMLGQQTETAKSPEEA) are disordered. C53 serves as the catalytic Thioimide intermediate. D60 (proton donor) is an active-site residue. Substrate is bound by residues 75–77 (VES) and 94–95 (HE).

Belongs to the GTP cyclohydrolase I family. QueF type 1 subfamily.

Its subcellular location is the cytoplasm. The enzyme catalyses 7-aminomethyl-7-carbaguanine + 2 NADP(+) = 7-cyano-7-deazaguanine + 2 NADPH + 3 H(+). It participates in tRNA modification; tRNA-queuosine biosynthesis. Its function is as follows. Catalyzes the NADPH-dependent reduction of 7-cyano-7-deazaguanine (preQ0) to 7-aminomethyl-7-deazaguanine (preQ1). The polypeptide is NADPH-dependent 7-cyano-7-deazaguanine reductase (Rhizobium etli (strain CIAT 652)).